The chain runs to 699 residues: Receptor-type tyrosine-protein phosphatase epsilon (699 aa).

A signal peptide spans 1 to 19 (MEPFCPLLLASFSLSLARA). Low complexity predominate over residues 20–36 (GQGNDTTPTESNWTSTT). Positions 20–40 (GQGNDTTPTESNWTSTTAGPP) are disordered. Residues 20–45 (GQGNDTTPTESNWTSTTAGPPDPGAS) are Extracellular-facing. N-linked (GlcNAc...) asparagine glycans are attached at residues Asn-23 and Asn-31. A helical transmembrane segment spans residues 46–68 (QPLLTWLLLPLLLLLFLLAAYFF). Residues 69 to 699 (RFRKQRKAVV…DIFSDYANFK (631 aa)) lie on the Cytoplasmic side of the membrane. Tyrosine-protein phosphatase domains are found at residues 134–393 (FREE…LLEY) and 425–688 (LEEE…VQDF). Residues Asp-302, 334-340 (CSAGVGR), and Gln-378 each bind substrate. Residue Cys-334 is the Phosphocysteine intermediate of the active site. Cys-629 functions as the Phosphocysteine intermediate in the catalytic mechanism. Position 695 is a phosphotyrosine (Tyr-695).

Belongs to the protein-tyrosine phosphatase family. Receptor class 4 subfamily. Monomer. Isoform 2: Homodimer. Can form oligomers. Dimerization is increased by oxidative stress and decreased by EGFR. Isoform 2 interacts with GRB2. A catalytically active cytoplasmic form (p65) is produced by proteolytic cleavage of either isoform 1, isoform 2 or isoform 3. Post-translationally, phosphorylated on tyrosine residues by tyrosine kinase Neu. In terms of processing, glycosylated. Isoform 2 is expressed in the spleen and thymus (at protein level). Detected in fibroblasts, myeloid cells, macrophages, and T-cells but not in B-cell lines. Isoform 1 and isoform 2 are expressed predominantly in the brain, testes, and lungs, with lower levels present in lymph nodes, thymus, spleen, heart and mammary glands. Isoform 1 is expressed in osteoclasts and not in osteoblasts and its expression is related to osteoclast differentiation. It is also expressed in the erythrocytes. Isoform 2 is strongly expressed in skeletal muscle and L6 skeletal muscle cell line.

The protein resides in the cell membrane. It localises to the cytoplasm. It carries out the reaction O-phospho-L-tyrosyl-[protein] + H2O = L-tyrosyl-[protein] + phosphate. With respect to regulation, inhibited by alendronate (ALN), orthovanadate, and phenylarsine oxide (PAO). Functionally, acts as a negative regulator of insulin receptor (IR) signaling and is involved in insulin-induced glucose metabolism mainly through direct dephosphorylation and inactivation of IR in hepatocytes and liver. Plays a critical role in signaling transduction pathways and phosphoprotein network topology in red blood cells. May play a role in osteoclast formation and function. In terms of biological role, acts as a negative regulator of insulin receptor (IR) signaling in skeletal muscle. Regulates insulin-induced tyrosine phosphorylation of insulin receptor (IR) and insulin receptor substrate 1 (IRS-1), phosphorylation of protein kinase B and glycogen synthase kinase-3 and insulin induced stimulation of glucose uptake. Its function is as follows. Isoform 1 and isoform 2 act as a negative regulator of FceRI-mediated signal transduction leading to cytokine production and degranulation, most likely by acting at the level of SYK to affect downstream events such as phosphorylation of SLP76 and LAT and mobilization of Ca(2+). The sequence is that of Receptor-type tyrosine-protein phosphatase epsilon (Ptpre) from Mus musculus (Mouse).